Consider the following 140-residue polypeptide: MAATFATPSTVIGLGGSSITTKPFSSSFLKPTLSAKNPLRLAGASGGRVTCFERNWLRRDLNVVGFGLIGWLAPSSIPAINGKSLTGLFFDSIGTELAHFPTPPALTSQFWLWLVTWHLGLFLCLTFGQIGFKGRTEDYF.

Residues methionine 1 to cysteine 51 constitute a chloroplast transit peptide. Over phenylalanine 52–aspartate 60 the chain is Stromal. The chain crosses the membrane as a helical span at residues leucine 61–asparagine 81. The Lumenal, thylakoid portion of the chain corresponds to glycine 82–glutamine 109. Residues phenylalanine 110–isoleucine 130 traverse the membrane as a helical segment. The Stromal segment spans residues glycine 131–phenylalanine 140.

The protein belongs to the PSAO family. As to quaternary structure, component of the photosystem I (PSI) complex. Interacts directly with PSAL.

It localises to the plastid. Its subcellular location is the chloroplast thylakoid membrane. Functionally, involved in the balancing of excitation energy between the two photosystems I (PSI) and II (PSII). The polypeptide is Photosystem I subunit O (PSAO) (Arabidopsis thaliana (Mouse-ear cress)).